The primary structure comprises 226 residues: MRTLILSLLLLVDLTTQAATLGFPALPGGGLVYKQVQSIRERRFADLVEQKTDFSCGAAALATILEKAYGAPLDEQAVIQGMLAHADPEIVRTQGFSMLDMKRYVESMGMRARGYRIEAAQLEQLKIPAIVLMEIRGYKHFVVLQRTQGEYVYVGDPALGHKRYALTEFAKGWNGIVFAVIGQGYDRGNPLLTPPEPLTARNRLDRFKPVRDAELMEFGFIQSDFF.

The signal sequence occupies residues 1–18 (MRTLILSLLLLVDLTTQA). The Peptidase C39 domain maps to 50-180 (QKTDFSCGAA…KGWNGIVFAV (131 aa)). Cys56 is an active-site residue.

It belongs to the FapD family.

The protein localises to the periplasm. Probable protease that might be involved in processing fibril precursors. Upon overexpression of the endogenous six-gene locus (fapA-fapF), cells form large clumps during liquid growth, make large amounts of biofilm and produce amyloid fibrils. This is Probable functional amyloid protease FapD from Pseudomonas aeruginosa (strain ATCC 15692 / DSM 22644 / CIP 104116 / JCM 14847 / LMG 12228 / 1C / PRS 101 / PAO1).